Consider the following 402-residue polypeptide: MAVQLKWPIIGVVIPCVLIAMVAYGSHYFVFRTNLSRTEQILYEVYVCIVWLSYYLAIVVDPGSPPKNFTPKAGEWRRWCKKCQNYKPERSHHCKTCNKCVLKMDHHCPWTYNCVGHNNLPHFLRFVFFLIVGMTYVLFQLGKQVLHYYDSSKLPSYLIDKKEMCAVIFLLPVTFFVFVSIIILFVRCMINLLFRGMTQIEVWEMERIGSQFHTERLWLQIRKNYFKLHGKEMPHLVSWNRTTRYYEVDENSNNDNSNENNIVPKDFTSDDIVFPYDLGVSSNMINACDYPWMWLLPWGGPRENGYHFQKNEFMEDDQLGLPWPPDGGHQEPMAPVDDDFDISDSELQDMPSLRRRLDPRNNMTRSEWMNDLGETLDDFGVDLDAEDIEHDDLVSKDEISNN.

The Cytoplasmic segment spans residues 1–8 (MAVQLKWP). Residues 9-29 (IIGVVIPCVLIAMVAYGSHYF) traverse the membrane as a helical segment. Over 30 to 39 (VFRTNLSRTE) the chain is Lumenal. Residues 40-60 (QILYEVYVCIVWLSYYLAIVV) form a helical membrane-spanning segment. At 61–125 (DPGSPPKNFT…GHNNLPHFLR (65 aa)) the chain is on the cytoplasmic side. The DHHC domain occupies 78–128 (RWCKKCQNYKPERSHHCKTCNKCVLKMDHHCPWTYNCVGHNNLPHFLRFVF). The active-site S-palmitoyl cysteine intermediate is Cys108. A helical membrane pass occupies residues 126 to 146 (FVFFLIVGMTYVLFQLGKQVL). Over 147–165 (HYYDSSKLPSYLIDKKEMC) the chain is Lumenal. Residues 166 to 186 (AVIFLLPVTFFVFVSIIILFV) traverse the membrane as a helical segment. The Cytoplasmic segment spans residues 187-402 (RCMINLLFRG…LVSKDEISNN (216 aa)).

Belongs to the DHHC palmitoyltransferase family. PFA4 subfamily.

It localises to the endoplasmic reticulum membrane. It carries out the reaction L-cysteinyl-[protein] + hexadecanoyl-CoA = S-hexadecanoyl-L-cysteinyl-[protein] + CoA. Mediates the reversible addition of palmitate to target proteins, thereby regulating their membrane association and biological function. The sequence is that of Palmitoyltransferase PFA4 from Debaryomyces hansenii (strain ATCC 36239 / CBS 767 / BCRC 21394 / JCM 1990 / NBRC 0083 / IGC 2968) (Yeast).